The chain runs to 176 residues: RNA 2',3'-cyclic phosphodiesterase (176 aa).

Catalysis depends on H39, which acts as the Proton donor. 2 short sequence motifs (HXTX) span residues 39–42 (HITL) and 122–125 (HLTV). Catalysis depends on H122, which acts as the Proton acceptor.

The protein belongs to the 2H phosphoesterase superfamily. ThpR family.

The catalysed reaction is a 3'-end 2',3'-cyclophospho-ribonucleotide-RNA + H2O = a 3'-end 2'-phospho-ribonucleotide-RNA + H(+). In terms of biological role, hydrolyzes RNA 2',3'-cyclic phosphodiester to an RNA 2'-phosphomonoester. This chain is RNA 2',3'-cyclic phosphodiesterase, found in Archaeoglobus fulgidus (strain ATCC 49558 / DSM 4304 / JCM 9628 / NBRC 100126 / VC-16).